A 258-amino-acid chain; its full sequence is Uridylate cyclase (258 aa).

The Guanylate cyclase domain occupies 50–190; the sequence is AAIFIDLRGS…DVVNKASKMC (141 aa). F53 is an a ribonucleoside 5'-triphosphate binding site. Mn(2+) is bound by residues D55 and D102.

Belongs to the adenylyl cyclase class-4/guanylyl cyclase family. Pyrimidine cyclase subfamily. As to quaternary structure, homodimer. It depends on Mn(2+) as a cofactor.

Its subcellular location is the cytoplasm. The catalysed reaction is UTP = 3',5'-cyclic UMP + diphosphate. Pycsar (pyrimidine cyclase system for antiphage resistance) provides immunity against bacteriophage. The pyrimidine cyclase (PycC) synthesizes cyclic nucleotides in response to infection; these serve as specific second messenger signals. The signals activate the adjacent effector, leading to bacterial cell death and abortive phage infection. A clade C Pycsar system. Functionally, the pyrimidine cyclase gene of a two-gene Pycsar system, weakly generates cyclic UMP (cUMP) from UTP, has little to no activity on ATP, CTP or GTP. Expression of this and adjacent effector GmPycTM (AC P0DV43) probably confers resistance to bacteriophage. The genes are probably only expressed in response to bacteriophage infection. The sequence is that of Uridylate cyclase from Gulbenkiania mobilis.